The chain runs to 353 residues: Phosphate acyltransferase (353 aa).

The protein belongs to the PlsX family. In terms of assembly, homodimer. Probably interacts with PlsY.

The protein resides in the cytoplasm. The catalysed reaction is a fatty acyl-[ACP] + phosphate = an acyl phosphate + holo-[ACP]. Its pathway is lipid metabolism; phospholipid metabolism. Functionally, catalyzes the reversible formation of acyl-phosphate (acyl-PO(4)) from acyl-[acyl-carrier-protein] (acyl-ACP). This enzyme utilizes acyl-ACP as fatty acyl donor, but not acyl-CoA. The polypeptide is Phosphate acyltransferase (Agrobacterium fabrum (strain C58 / ATCC 33970) (Agrobacterium tumefaciens (strain C58))).